A 625-amino-acid polypeptide reads, in one-letter code: tRNA uridine 5-carboxymethylaminomethyl modification enzyme MnmG (625 aa).

FAD is bound by residues 10–15, V122, and S177; that span reads GGGHAG. Residue 271–285 coordinates NAD(+); that stretch reads GPRYCPSIEDKVNRF. Q368 provides a ligand contact to FAD.

Belongs to the MnmG family. As to quaternary structure, homodimer. Heterotetramer of two MnmE and two MnmG subunits. It depends on FAD as a cofactor.

The protein localises to the cytoplasm. In terms of biological role, NAD-binding protein involved in the addition of a carboxymethylaminomethyl (cmnm) group at the wobble position (U34) of certain tRNAs, forming tRNA-cmnm(5)s(2)U34. The sequence is that of tRNA uridine 5-carboxymethylaminomethyl modification enzyme MnmG from Wolinella succinogenes (strain ATCC 29543 / DSM 1740 / CCUG 13145 / JCM 31913 / LMG 7466 / NCTC 11488 / FDC 602W) (Vibrio succinogenes).